Reading from the N-terminus, the 619-residue chain is Lysophospholipid acyltransferase (619 aa).

Topologically, residues 1-19 (MYNPVDAVLTKIITNYGID) are lumenal. Residues 20-39 (SFTLRYAICLLGSFPLNAIL) form a helical membrane-spanning segment. Topologically, residues 40–51 (KRIPEKRIGLKC) are cytoplasmic. Residues 52-72 (CFIISMSMFYLFGVLNLVSGF) form a helical membrane-spanning segment. The Lumenal segment spans residues 73–92 (RTLFISTMFTYLISRFYRSK). A helical membrane pass occupies residues 93-113 (FMPHLNFMFVMGHLAINHIHA). Residues 114–231 (QFLNEQTQTT…GERRQIPKNG (118 aa)) are Cytoplasmic-facing. Asp146 functions as the Nucleophile in the catalytic mechanism. The helical transmembrane segment at 232–252 (KLALWKVVQGLAWMILSTLGM) threads the bilayer. Over 253–274 (KHFPVKYVLDKDGFPTRSFIFR) the chain is Lumenal. A helical transmembrane segment spans residues 275–295 (IHYLFLLGFIHRFKYYAAWTI). Residues 296–429 (SEGSCILCGL…TPLPSKKIYD (134 aa)) are Cytoplasmic-facing. The active-site Nucleophile is the Glu297. His382 is an active-site residue. A helical membrane pass occupies residues 430-450 (LVGIYAIKLAFGYMVQPFIIL). The Lumenal portion of the chain corresponds to 451-456 (DLKPSL). The chain crosses the membrane as a helical span at residues 457–477 (MVWGSVYFYVHIIVAFSFFLF). Residues 478-619 (RGPYAKQVTE…SPKPISKKEE (142 aa)) lie on the Cytoplasmic side of the membrane. Residue Ser513 is modified to Phosphoserine. Residues 545–593 (ELEKWDNAKEDWEDFCKDYKEWRNKNGLEIEEENLSKAFERFKQEFSNA) are a coiled coil. A disordered region spans residues 592–619 (NAASGSGERVRKMSFSGYSPKPISKKEE). 3 positions are modified to phosphoserine: Ser605, Ser610, and Ser615.

It belongs to the membrane-bound acyltransferase family.

Its subcellular location is the endoplasmic reticulum membrane. It carries out the reaction a 1-acyl-sn-glycero-3-phosphate + an acyl-CoA = a 1,2-diacyl-sn-glycero-3-phosphate + CoA. The enzyme catalyses a 1-acyl-sn-glycero-3-phosphocholine + an acyl-CoA = a 1,2-diacyl-sn-glycero-3-phosphocholine + CoA. It catalyses the reaction 1-acyl-sn-glycero-3-phospho-(1'-sn-glycerol) + an acyl-CoA = a 1,2-diacyl-sn-glycero-3-phospho-(1'-sn-glycerol) + CoA. The catalysed reaction is a 1-acyl-sn-glycero-3-phospho-(1D-myo-inositol) + an acyl-CoA = a 1,2-diacyl-sn-glycero-3-phospho-(1D-myo-inositol) + CoA. It carries out the reaction a 1-acyl-sn-glycero-3-phospho-L-serine + an acyl-CoA = a 1,2-diacyl-sn-glycero-3-phospho-L-serine + CoA. The enzyme catalyses a 1-acyl-sn-glycero-3-phosphoethanolamine + an acyl-CoA = a 1,2-diacyl-sn-glycero-3-phosphoethanolamine + CoA. It catalyses the reaction 1-(9Z-octadecenoyl)-sn-glycero-3-phosphoethanolamine + (9Z)-octadecenoyl-CoA = 1,2-di-(9Z-octadecenoyl)-sn-glycero-3-phosphoethanolamine + CoA. The catalysed reaction is 1-(9Z-octadecenoyl)-sn-glycero-3-phosphoethanolamine + (9Z)-hexadecenoyl-CoA = 1-(9Z)-octadecenoyl-2-(9Z)-hexadecenoyl-sn-glycero-3-phosphoethanolamine + CoA. It carries out the reaction 1-(9Z-octadecenoyl)-sn-glycero-3-phosphoethanolamine + hexadecanoyl-CoA = 1-(9Z-octadecenoyl)-2-hexadecanoyl-sn-glycero-3-phosphoethanolamine + CoA. The enzyme catalyses 1-(9Z-octadecenoyl)-sn-glycero-3-phosphoethanolamine + tetradecanoyl-CoA = 1-(9Z)-octadecenoyl-2-tetradecanoyl-sn-glycero-3-phosphoethanolamine + CoA. It catalyses the reaction 1-(9Z-octadecenoyl)-sn-glycero-3-phosphate + (9Z)-octadecenoyl-CoA = 1,2-di-(9Z-octadecenoyl)-sn-glycero-3-phosphate + CoA. The catalysed reaction is (9Z)-hexadecenoyl-CoA + 1-hexadecanoyl-sn-glycero-3-phosphocholine = 1-hexadecanoyl-2-(9Z-hexadecenoyl)-sn-glycero-3-phosphocholine + CoA. It carries out the reaction 1-hexadecanoyl-sn-glycero-3-phosphocholine + (9Z)-octadecenoyl-CoA = 1-hexadecanoyl-2-(9Z-octadecenoyl)-sn-glycero-3-phosphocholine + CoA. The enzyme catalyses 1-tetradecanoyl-sn-glycero-3-phosphoethanolamine + (9Z)-octadecenoyl-CoA = 1-tetradecanoyl-2-(9Z-octadecenoyl)-sn-glycero-3-phosphoethanolamine + CoA. It catalyses the reaction 1-(9Z-octadecenoyl)-sn-glycero-3-phospho-L-serine + (9Z)-octadecenoyl-CoA = 1,2-di-(9Z)-octadecenoyl-sn-glycero-3-phospho-L-serine + CoA. The catalysed reaction is a 1-acyl-sn-glycero-3-phospho-(1D-myo-inositol) + (9Z)-octadecenoyl-CoA = a 1-acyl-2-(9Z-octadecenoyl)-sn-glycero-3-phospho-(1D-myo-inositol) + CoA. It functions in the pathway lipid metabolism; phospholipid metabolism. Its function is as follows. Broad specificity membrane-bound O-acyltransferase that mediates the incorporation of unsaturated acyl chains into the sn-2 position of various lysophospholipids. Preferentially acylates lysophosphocholine (LPC), but also lysophosphoethanolamine (LPE), lysophosphatidylglycerol (LPG), lysophosphatidic acid (LPA), lysophosphoethanolamine (LPE), lysophosphoinositol (LPI), and lysophosphoserine (LPS). Prefers an acyl residue to an alkyl residue at the sn-1 position of lysophospholipid acceptors. Accepts acyl chains in acyl-CoA from C-2 to C-20, and shows strong preference for unsaturated acyl-CoAs with 16-20 carbons. Together with SLC1, plays a central role in phosphatidic acid (PA) biosynthesis. PA is the intermediate, from which all glycerophospholipids are synthesized. Can also introduce an acyl chain at the sn-1 position of the lysophosphatidylcholine analog 1-hydroxy-2-hexadecyl-sn-glycero-3-phosphocholine (HHPC). This is Lysophospholipid acyltransferase from Saccharomyces cerevisiae (strain ATCC 204508 / S288c) (Baker's yeast).